Here is a 233-residue protein sequence, read N- to C-terminus: Large ribosomal subunit protein uL1 (233 aa).

It belongs to the universal ribosomal protein uL1 family. As to quaternary structure, part of the 50S ribosomal subunit.

In terms of biological role, binds directly to 23S rRNA. The L1 stalk is quite mobile in the ribosome, and is involved in E site tRNA release. Functionally, protein L1 is also a translational repressor protein, it controls the translation of the L11 operon by binding to its mRNA. This Buchnera aphidicola subsp. Baizongia pistaciae (strain Bp) protein is Large ribosomal subunit protein uL1.